A 205-amino-acid chain; its full sequence is Ras-related protein rab-6.1 (205 aa).

GTP contacts are provided by residues 18 to 25, Thr43, 66 to 70, and 124 to 127; these read GEQSVGKT, DTAGQ, and NKTD. Residues Cys203 and Cys205 are each lipidated (S-geranylgeranyl cysteine). Cysteine methyl ester is present on Cys205.

It belongs to the small GTPase superfamily. Rab family. As to quaternary structure, interacts with GARP complex component vps-52. In terms of tissue distribution, highly expressed in body wall muscle, intestine, somatic gonad, distal tip cells, vulva, and neurons including AVB, AVD, RIG, and PVC (at protein level). Not expressed in AVA and RMDV neurons.

Its subcellular location is the cell membrane. It is found in the cell projection. The protein localises to the dendrite. The protein resides in the perikaryon. It localises to the golgi apparatus. Its subcellular location is the cytoplasmic vesicle. It is found in the secretory vesicle. The small GTPases Rab are key regulators of intracellular membrane trafficking, from the formation of transport vesicles to their fusion with membranes. Rabs cycle between an inactive GDP-bound form and an active GTP-bound form that is able to recruit to membranes different set of downstream effectors directly responsible for vesicle formation, movement, tethering and fusion. In its active GTP-bound form, acts redundantly with rab-6.2 (in its active GTP-bound form) to positively regulate the retrograde trafficking of cargo molecules from endosomes to Golgi structures. Required for the retrograde trafficking of glr-1, a subunit of AMPA-type glutamate receptors (AMPRs), out of early endosomes and into the Golgi compartment in neurons. Together with rab-6.2, promotes the retrograde trafficking of mig-14 from endosomes to Golgi structures in the intestine. In oocytes, in its active GTP-bound form, involved in the membrane fusion and exocytosis of secretory vesicles (cortical granules) to play a role in the remodeling of the embryo surface following fertilization. Recruits sep-1 to cortical granules (derived from the Golgi complex) for exocytosis during the oocyte-to-embryo transition. Required for seam cell division and alae formation. Promotes spontaneous reversals in locomotion. This is Ras-related protein rab-6.1 from Caenorhabditis elegans.